The following is a 455-amino-acid chain: GTPase Der (455 aa).

EngA-type G domains lie at 4-169 (PIVA…PPKH) and 178-353 (IQMA…EQHR). Residues 10-17 (GRPNVGKS), 57-61 (DTGGL), 120-123 (NKCE), 184-191 (GRPNVGKS), 231-235 (DTAGI), and 296-299 (NKWD) each bind GTP. The KH-like domain occupies 354–439 (RRVSTSVVNE…PLKLFWRGKQ (86 aa)).

The protein belongs to the TRAFAC class TrmE-Era-EngA-EngB-Septin-like GTPase superfamily. EngA (Der) GTPase family. As to quaternary structure, associates with the 50S ribosomal subunit.

Its function is as follows. GTPase that plays an essential role in the late steps of ribosome biogenesis. In Prochlorococcus marinus (strain MIT 9313), this protein is GTPase Der.